Consider the following 499-residue polypeptide: Glycerol kinase (499 aa).

Residue threonine 17 participates in ADP binding. Residues threonine 17, threonine 18, and serine 19 each contribute to the ATP site. Threonine 17 contributes to the sn-glycerol 3-phosphate binding site. Residue arginine 21 coordinates ADP. Sn-glycerol 3-phosphate contacts are provided by arginine 87, glutamate 88, tyrosine 139, and aspartate 243. The glycerol site is built by arginine 87, glutamate 88, tyrosine 139, aspartate 243, and glutamine 244. Residues threonine 265 and glycine 308 each contribute to the ADP site. Residues threonine 265, glycine 308, glutamine 312, and glycine 409 each contribute to the ATP site. ADP contacts are provided by glycine 409 and asparagine 413.

This sequence belongs to the FGGY kinase family.

It catalyses the reaction glycerol + ATP = sn-glycerol 3-phosphate + ADP + H(+). It participates in polyol metabolism; glycerol degradation via glycerol kinase pathway; sn-glycerol 3-phosphate from glycerol: step 1/1. With respect to regulation, inhibited by fructose 1,6-bisphosphate (FBP). Key enzyme in the regulation of glycerol uptake and metabolism. Catalyzes the phosphorylation of glycerol to yield sn-glycerol 3-phosphate. The polypeptide is Glycerol kinase (Pseudomonas entomophila (strain L48)).